The primary structure comprises 275 residues: Tryptophan synthase alpha chain (275 aa).

Active-site proton acceptor residues include glutamate 51 and glutamate 62.

This sequence belongs to the TrpA family. As to quaternary structure, tetramer of two alpha and two beta chains.

The enzyme catalyses (1S,2R)-1-C-(indol-3-yl)glycerol 3-phosphate + L-serine = D-glyceraldehyde 3-phosphate + L-tryptophan + H2O. The protein operates within amino-acid biosynthesis; L-tryptophan biosynthesis; L-tryptophan from chorismate: step 5/5. In terms of biological role, the alpha subunit is responsible for the aldol cleavage of indoleglycerol phosphate to indole and glyceraldehyde 3-phosphate. The chain is Tryptophan synthase alpha chain from Caulobacter sp. (strain K31).